The sequence spans 255 residues: MLLVIDVGNTNTVVGLYEGQTLAYNWRITTDKGRTGDEYAMLLHELLRLAGVTFDRIEDVIVSSVVPPTLQAIESLCRKYVGRSPYVVGPGIKTGMPILYENPREVGADRIVNAVAAFARWQRSLIVVDFGTATTFDYINAKGQYHGGAIAPGLKISADALFDKASKLPRVEVSRPPTVVAKNTVNSIQAGLFYGYVGLVDGIVERMRKETRDDPLVVATGGLATLIADETQTIHEVESDLTLEGLRILYLRNKG.

Position 6 to 13 (6 to 13 (DVGNTNTV)) interacts with ATP. Substrate is bound by residues Tyr100 and 107–110 (GADR). The active-site Proton acceptor is Asp109. Residue Asp129 coordinates K(+). Position 132 (Thr132) interacts with ATP. Residue Thr184 coordinates substrate.

The protein belongs to the type III pantothenate kinase family. As to quaternary structure, homodimer. Requires NH4(+) as cofactor. It depends on K(+) as a cofactor.

The protein localises to the cytoplasm. The enzyme catalyses (R)-pantothenate + ATP = (R)-4'-phosphopantothenate + ADP + H(+). It functions in the pathway cofactor biosynthesis; coenzyme A biosynthesis; CoA from (R)-pantothenate: step 1/5. Functionally, catalyzes the phosphorylation of pantothenate (Pan), the first step in CoA biosynthesis. The chain is Type III pantothenate kinase from Syntrophotalea carbinolica (strain DSM 2380 / NBRC 103641 / GraBd1) (Pelobacter carbinolicus).